The following is a 342-amino-acid chain: Holliday junction branch migration complex subunit RuvB (342 aa).

Residues 1 to 184 form a large ATPase domain (RuvB-L) region; that stretch reads MEENFDIREQ…FGINLHLEYY (184 aa). ATP-binding positions include Leu-23, Arg-24, Gly-65, Lys-68, Thr-69, Thr-70, 131-133, Arg-174, Tyr-184, and Arg-221; that span reads EDY. Mg(2+) is bound at residue Thr-69. Residues 185–255 form a small ATPAse domain (RuvB-S) region; it reads DDDVLTSIIR…IARFALEALN (71 aa). The head domain (RuvB-H) stretch occupies residues 258–342; that stretch reads RYGLDEIDNK…YNSQKTLFDD (85 aa). The DNA site is built by Arg-313 and Arg-318.

It belongs to the RuvB family. As to quaternary structure, homohexamer. Forms an RuvA(8)-RuvB(12)-Holliday junction (HJ) complex. HJ DNA is sandwiched between 2 RuvA tetramers; dsDNA enters through RuvA and exits via RuvB. An RuvB hexamer assembles on each DNA strand where it exits the tetramer. Each RuvB hexamer is contacted by two RuvA subunits (via domain III) on 2 adjacent RuvB subunits; this complex drives branch migration. In the full resolvosome a probable DNA-RuvA(4)-RuvB(12)-RuvC(2) complex forms which resolves the HJ.

Its subcellular location is the cytoplasm. The enzyme catalyses ATP + H2O = ADP + phosphate + H(+). In terms of biological role, the RuvA-RuvB-RuvC complex processes Holliday junction (HJ) DNA during genetic recombination and DNA repair, while the RuvA-RuvB complex plays an important role in the rescue of blocked DNA replication forks via replication fork reversal (RFR). RuvA specifically binds to HJ cruciform DNA, conferring on it an open structure. The RuvB hexamer acts as an ATP-dependent pump, pulling dsDNA into and through the RuvAB complex. RuvB forms 2 homohexamers on either side of HJ DNA bound by 1 or 2 RuvA tetramers; 4 subunits per hexamer contact DNA at a time. Coordinated motions by a converter formed by DNA-disengaged RuvB subunits stimulates ATP hydrolysis and nucleotide exchange. Immobilization of the converter enables RuvB to convert the ATP-contained energy into a lever motion, pulling 2 nucleotides of DNA out of the RuvA tetramer per ATP hydrolyzed, thus driving DNA branch migration. The RuvB motors rotate together with the DNA substrate, which together with the progressing nucleotide cycle form the mechanistic basis for DNA recombination by continuous HJ branch migration. Branch migration allows RuvC to scan DNA until it finds its consensus sequence, where it cleaves and resolves cruciform DNA. This chain is Holliday junction branch migration complex subunit RuvB, found in Phocaeicola vulgatus (strain ATCC 8482 / DSM 1447 / JCM 5826 / CCUG 4940 / NBRC 14291 / NCTC 11154) (Bacteroides vulgatus).